Here is a 284-residue protein sequence, read N- to C-terminus: Two-pore potassium channel 4 (284 aa).

A disordered region spans residues 1–21; it reads MEEENLLNENLLHPNESSPEE. The Cytoplasmic portion of the chain corresponds to 1–31; sequence MEEENLLNENLLHPNESSPEETQVTTVSKSK. The chain crosses the membrane as a helical span at residues 32–52; that stretch reads WTILVLAMILLLVYLTFGVCT. Residues 70–89 constitute an intramembrane region (pore-forming); sequence DAFYFSIVTFSTVGYGDIVP. Residues 93 to 113 traverse the membrane as a helical segment; the sequence is TTKILTIVLVSTGVVFLDYLL. The Cytoplasmic portion of the chain corresponds to 114–156; that stretch reads NRVVSHVLSLQENAILDRINKTRNRAIRDHIAEDGKIRLKWKL. Residues 157–177 form a helical membrane-spanning segment; the sequence is CLAFCAVGLCVGSGALFLHVF. Positions 184-203 form an intramembrane region, pore-forming; the sequence is DSVYLSVISVTTVGYGDKTF. The chain crosses the membrane as a helical span at residues 211-231; sequence FAVFWLLLSTIAMATLFLYLA. The Cytoplasmic segment spans residues 232–284; that stretch reads EMRIDRTTVMKLPPSESEFIVFKLRESGRISEDDIKQIVREFENLEEVPSSGS.

Belongs to the two pore domain potassium channel (TC 1.A.1.7) family. As to quaternary structure, homodimer. Predominantly expressed in pollen.

It is found in the cell membrane. Its function is as follows. Voltage-independent, instantaneously activating, potassium-selective plasma membrane ion channel. Open rectifier. Regulated by cytoplasmic pH and extra-cellular calcium. Has some permeability for Rb(+) and NH(4)(+), but none for Na(+) or Li(+). The protein is Two-pore potassium channel 4 (TPK4) of Arabidopsis thaliana (Mouse-ear cress).